A 496-amino-acid chain; its full sequence is Cytosol aminopeptidase (496 aa).

The Mn(2+) site is built by Lys-258 and Asp-263. Lys-270 is an active-site residue. The Mn(2+) site is built by Asp-281, Asp-340, and Glu-342. Arg-344 is an active-site residue.

This sequence belongs to the peptidase M17 family. It depends on Mn(2+) as a cofactor.

It is found in the cytoplasm. The enzyme catalyses Release of an N-terminal amino acid, Xaa-|-Yaa-, in which Xaa is preferably Leu, but may be other amino acids including Pro although not Arg or Lys, and Yaa may be Pro. Amino acid amides and methyl esters are also readily hydrolyzed, but rates on arylamides are exceedingly low.. The catalysed reaction is Release of an N-terminal amino acid, preferentially leucine, but not glutamic or aspartic acids.. In terms of biological role, presumably involved in the processing and regular turnover of intracellular proteins. Catalyzes the removal of unsubstituted N-terminal amino acids from various peptides. This chain is Cytosol aminopeptidase (pepA), found in Helicobacter pylori (strain ATCC 700392 / 26695) (Campylobacter pylori).